Reading from the N-terminus, the 335-residue chain is Ketol-acid reductoisomerase (NADP(+)) 2 (335 aa).

The KARI N-terminal Rossmann domain maps to 1–180 (MKTYYEKDAN…GCTRAGVIET (180 aa)). NADP(+) is bound by residues 24–27 (YGSQ), Arg-47, Ser-51, and 81–84 (DEQQ). His-106 is an active-site residue. Gly-132 lines the NADP(+) pocket. In terms of domain architecture, KARI C-terminal knotted spans 181–326 (TFQEETETDL…AELREMMSWI (146 aa)). Mg(2+) contacts are provided by Asp-189, Glu-193, Glu-225, and Glu-229. Ser-250 contacts substrate.

The protein belongs to the ketol-acid reductoisomerase family. Mg(2+) is required as a cofactor.

It carries out the reaction (2R)-2,3-dihydroxy-3-methylbutanoate + NADP(+) = (2S)-2-acetolactate + NADPH + H(+). The enzyme catalyses (2R,3R)-2,3-dihydroxy-3-methylpentanoate + NADP(+) = (S)-2-ethyl-2-hydroxy-3-oxobutanoate + NADPH + H(+). The protein operates within amino-acid biosynthesis; L-isoleucine biosynthesis; L-isoleucine from 2-oxobutanoate: step 2/4. It participates in amino-acid biosynthesis; L-valine biosynthesis; L-valine from pyruvate: step 2/4. In terms of biological role, involved in the biosynthesis of branched-chain amino acids (BCAA). Catalyzes an alkyl-migration followed by a ketol-acid reduction of (S)-2-acetolactate (S2AL) to yield (R)-2,3-dihydroxy-isovalerate. In the isomerase reaction, S2AL is rearranged via a Mg-dependent methyl migration to produce 3-hydroxy-3-methyl-2-ketobutyrate (HMKB). In the reductase reaction, this 2-ketoacid undergoes a metal-dependent reduction by NADPH to yield (R)-2,3-dihydroxy-isovalerate. This is Ketol-acid reductoisomerase (NADP(+)) 2 from Bacillus cereus (strain ZK / E33L).